The chain runs to 401 residues: Lipid-A-disaccharide synthase (401 aa).

The protein belongs to the LpxB family.

The enzyme catalyses a lipid X + a UDP-2-N,3-O-bis[(3R)-3-hydroxyacyl]-alpha-D-glucosamine = a lipid A disaccharide + UDP + H(+). Its pathway is bacterial outer membrane biogenesis; LPS lipid A biosynthesis. In terms of biological role, condensation of UDP-2,3-diacylglucosamine and 2,3-diacylglucosamine-1-phosphate to form lipid A disaccharide, a precursor of lipid A, a phosphorylated glycolipid that anchors the lipopolysaccharide to the outer membrane of the cell. This Ruegeria pomeroyi (strain ATCC 700808 / DSM 15171 / DSS-3) (Silicibacter pomeroyi) protein is Lipid-A-disaccharide synthase.